A 624-amino-acid polypeptide reads, in one-letter code: Chaperone protein HtpG (624 aa).

An a; substrate-binding region spans residues 1–338 (MNNKNKITHT…SQDLPLNISR (338 aa)). The b stretch occupies residues 339–552 (EILQDSSITH…TNDMSTQMAK (214 aa)). Residues 553–624 (IFSAAGQPIP…IQRINNFFIS (72 aa)) are c.

It belongs to the heat shock protein 90 family. Homodimer.

The protein localises to the cytoplasm. Functionally, molecular chaperone. Has ATPase activity. This Buchnera aphidicola subsp. Cinara cedri (strain Cc) protein is Chaperone protein HtpG.